A 429-amino-acid polypeptide reads, in one-letter code: D-galactonate dehydratase family member Caci_4410 (429 aa).

Positions 1-22 (MTDANHLLDPSGALPQTRPPWT) are disordered. A Mg(2+)-binding site is contributed by aspartate 233. A D-arabinonate-binding site is contributed by histidine 235. Residues glutamate 259 and glutamate 285 each contribute to the Mg(2+) site. Positions 285, 306, 335, and 362 each coordinate D-arabinonate.

Belongs to the mandelate racemase/muconate lactonizing enzyme family. GalD subfamily.

Its function is as follows. Has no detectable activity with D-mannonate and with a panel of 70 other acid sugars (in vitro), in spite of the conservation of the residues that are expected to be important for catalytic activity and cofactor binding. May have evolved a divergent function. This is D-galactonate dehydratase family member Caci_4410 from Catenulispora acidiphila (strain DSM 44928 / JCM 14897 / NBRC 102108 / NRRL B-24433 / ID139908).